Here is a 77-residue protein sequence, read N- to C-terminus: uncharacterized protein (77 aa).

A helical transmembrane segment spans residues asparagine 57–threonine 76.

The protein localises to the membrane. This is an uncharacterized protein from Schizosaccharomyces pombe (strain 972 / ATCC 24843) (Fission yeast).